We begin with the raw amino-acid sequence, 311 residues long: Cell division protein ZipA (311 aa).

Residues 1–6 lie on the Periplasmic side of the membrane; it reads MENLQL. The helical transmembrane segment at 7-27 threads the bilayer; it reads VLFVLGAIAIIAVLVHGFWSI. Residues 28–311 are Cytoplasmic-facing; that stretch reads RKQQPKSLKE…YLQRIRAQLD (284 aa). The tract at residues 46–114 is disordered; sequence DQASVRDSQG…FALSDEPVQR (69 aa). Basic and acidic residues-rich tracts occupy residues 62-83 and 94-103; these read GEVRVRKEVPATDRQEKEDKPV and RDVEDSRHEQ.

This sequence belongs to the ZipA family. Interacts with FtsZ via their C-terminal domains.

Its subcellular location is the cell inner membrane. Its function is as follows. Essential cell division protein that stabilizes the FtsZ protofilaments by cross-linking them and that serves as a cytoplasmic membrane anchor for the Z ring. Also required for the recruitment to the septal ring of downstream cell division proteins. This chain is Cell division protein ZipA, found in Shewanella woodyi (strain ATCC 51908 / MS32).